A 641-amino-acid chain; its full sequence is Macrolide export ATP-binding/permease protein MacB (641 aa).

In terms of domain architecture, ABC transporter spans 2–240 (IKLENIKKSF…LKQNLKEIKP (239 aa)). 38 to 45 (GQSGSGKS) contributes to the ATP binding site. Transmembrane regions (helical) follow at residues 268–288 (FLTMLGIIIGIASVICVVALA), 516–536 (LLISGIALISLMVGGIGVMNI), 565–585 (FLIEAILLCAIGGSIGIGLAY), and 601–621 (IFSTASIFIALGVSSLIGIVF).

The protein belongs to the ABC transporter superfamily. Macrolide exporter (TC 3.A.1.122) family. In terms of assembly, homodimer.

It is found in the cell inner membrane. Non-canonical ABC transporter that contains transmembrane domains (TMD), which form a pore in the inner membrane, and an ATP-binding domain (NBD), which is responsible for energy generation. Confers resistance against macrolides. In Campylobacter fetus subsp. fetus (strain 82-40), this protein is Macrolide export ATP-binding/permease protein MacB.